A 118-amino-acid polypeptide reads, in one-letter code: UPF0102 protein lpg2994 (118 aa).

This sequence belongs to the UPF0102 family.

The chain is UPF0102 protein lpg2994 from Legionella pneumophila subsp. pneumophila (strain Philadelphia 1 / ATCC 33152 / DSM 7513).